Reading from the N-terminus, the 262-residue chain is Ribosomal RNA small subunit methyltransferase A (262 aa).

S-adenosyl-L-methionine contacts are provided by N14, L16, G41, E62, D87, and N109.

It belongs to the class I-like SAM-binding methyltransferase superfamily. rRNA adenine N(6)-methyltransferase family. RsmA subfamily.

It is found in the cytoplasm. It catalyses the reaction adenosine(1518)/adenosine(1519) in 16S rRNA + 4 S-adenosyl-L-methionine = N(6)-dimethyladenosine(1518)/N(6)-dimethyladenosine(1519) in 16S rRNA + 4 S-adenosyl-L-homocysteine + 4 H(+). Its function is as follows. Specifically dimethylates two adjacent adenosines (A1518 and A1519) in the loop of a conserved hairpin near the 3'-end of 16S rRNA in the 30S particle. May play a critical role in biogenesis of 30S subunits. The sequence is that of Ribosomal RNA small subunit methyltransferase A from Francisella tularensis subsp. holarctica (strain FTNF002-00 / FTA).